The following is a 171-amino-acid chain: MLSHLIIGASGLYLGDMLFIGISFIVLMALISVVAWKPITKMMADRADKIANDIDSAQKSRQEASDLADQRRDALSHSRAEASEIVADAKKSGEKQRSSIVADAQNEATQYKQNARKDIEQERQDALKNVQSDVADISVAIATKIIKKQLDPEGQQALINSYIEGLGKHES.

The chain crosses the membrane as a helical span at residues 14-34; it reads LGDMLFIGISFIVLMALISVV. Positions 56-97 are enriched in basic and acidic residues; that stretch reads SAQKSRQEASDLADQRRDALSHSRAEASEIVADAKKSGEKQR. A disordered region spans residues 56–104; it reads SAQKSRQEASDLADQRRDALSHSRAEASEIVADAKKSGEKQRSSIVADA.

Belongs to the ATPase B chain family. In terms of assembly, F-type ATPases have 2 components, F(1) - the catalytic core - and F(0) - the membrane proton channel. F(1) has five subunits: alpha(3), beta(3), gamma(1), delta(1), epsilon(1). F(0) has three main subunits: a(1), b(2) and c(10-14). The alpha and beta chains form an alternating ring which encloses part of the gamma chain. F(1) is attached to F(0) by a central stalk formed by the gamma and epsilon chains, while a peripheral stalk is formed by the delta and b chains.

The protein localises to the cell membrane. F(1)F(0) ATP synthase produces ATP from ADP in the presence of a proton or sodium gradient. F-type ATPases consist of two structural domains, F(1) containing the extramembraneous catalytic core and F(0) containing the membrane proton channel, linked together by a central stalk and a peripheral stalk. During catalysis, ATP synthesis in the catalytic domain of F(1) is coupled via a rotary mechanism of the central stalk subunits to proton translocation. Functionally, component of the F(0) channel, it forms part of the peripheral stalk, linking F(1) to F(0). This is ATP synthase subunit b from Lactiplantibacillus plantarum (strain ATCC BAA-793 / NCIMB 8826 / WCFS1) (Lactobacillus plantarum).